Here is a 388-residue protein sequence, read N- to C-terminus: Chorismate synthase (388 aa).

Positions 39 and 45 each coordinate NADP(+). Residues 95–118 (EKNEKSRRVSRPRPGHADLVGGMK) form a disordered region. FMN is bound by residues 130–132 (RSS), 251–252 (NA), Gly-296, 311–315 (KPIPT), and Arg-337.

Belongs to the chorismate synthase family. In terms of assembly, homotetramer. Requires FMNH2 as cofactor.

It catalyses the reaction 5-O-(1-carboxyvinyl)-3-phosphoshikimate = chorismate + phosphate. Its pathway is metabolic intermediate biosynthesis; chorismate biosynthesis; chorismate from D-erythrose 4-phosphate and phosphoenolpyruvate: step 7/7. Its function is as follows. Catalyzes the anti-1,4-elimination of the C-3 phosphate and the C-6 proR hydrogen from 5-enolpyruvylshikimate-3-phosphate (EPSP) to yield chorismate, which is the branch point compound that serves as the starting substrate for the three terminal pathways of aromatic amino acid biosynthesis. This reaction introduces a second double bond into the aromatic ring system. The sequence is that of Chorismate synthase from Listeria monocytogenes serotype 4b (strain CLIP80459).